Consider the following 377-residue polypeptide: Glutamate 5-kinase (377 aa).

K17 serves as a coordination point for ATP. Substrate-binding residues include S56, D143, and N155. An ATP-binding site is contributed by 217–223 (SGGMFSK). In terms of domain architecture, PUA spans 282-360 (AGDLVIDDGA…CEIESILGKC (79 aa)).

This sequence belongs to the glutamate 5-kinase family.

It localises to the cytoplasm. The enzyme catalyses L-glutamate + ATP = L-glutamyl 5-phosphate + ADP. The protein operates within amino-acid biosynthesis; L-proline biosynthesis; L-glutamate 5-semialdehyde from L-glutamate: step 1/2. Its function is as follows. Catalyzes the transfer of a phosphate group to glutamate to form L-glutamate 5-phosphate. This is Glutamate 5-kinase from Maridesulfovibrio salexigens (strain ATCC 14822 / DSM 2638 / NCIMB 8403 / VKM B-1763) (Desulfovibrio salexigens).